The following is a 380-amino-acid chain: Palmitoyltransferase ZDHHC20 (380 aa).

The Cytoplasmic segment spans residues 1–14; it reads MAPWTLWRCCQRVV. Residues 15–35 form a helical membrane-spanning segment; the sequence is GWVPVLFITFVVVWSYYAYVV. Residues 36–53 are Lumenal-facing; sequence ELCVSTISRTGEKGKTVV. The chain crosses the membrane as a helical span at residues 54–74; that stretch reads YLVAFHLFFVMFVWSYWMTIF. Over 75-169 the chain is Cytoplasmic; sequence TSPASPSKEF…NNCVGFTNYK (95 aa). In terms of domain architecture, DHHC spans 126-176; sequence RYCEKCQLIKPDRAHHCSACDRCVLKMDHHCPWVNNCVGFTNYKFFMLFLL. 2 residues coordinate Zn(2+): C128 and C131. Substrate is bound by residues K135 and 140–143; that span reads HHCS. Residues H141, C142, C145, C148, and H155 each coordinate Zn(2+). Residue C156 is the S-palmitoyl cysteine intermediate of the active site. C162 lines the Zn(2+) pocket. A helical transmembrane segment spans residues 170–190; that stretch reads FFMLFLLYSLLYCLFVAATVL. Topologically, residues 191–222 are lumenal; the sequence is EYFIKFWTLCRRKSTENCPKNEPTVLNFPSAK. A helical transmembrane segment spans residues 223 to 246; the sequence is FHVLFLFFVSAMFFVSVLSLFSYH. Residues 247–380 lie on the Cytoplasmic side of the membrane; it reads CWLVGKNRTT…NNHVTVEIEN (134 aa). S320, S345, and S354 each carry phosphoserine.

It belongs to the DHHC palmitoyltransferase family. Autopalmitoylated (in vitro). Highest levels in lung.

The protein localises to the golgi apparatus membrane. It is found in the cell membrane. It localises to the cytoplasm. The protein resides in the perinuclear region. Its subcellular location is the endoplasmic reticulum membrane. The protein localises to the endoplasmic reticulum-Golgi intermediate compartment membrane. It carries out the reaction L-cysteinyl-[protein] + hexadecanoyl-CoA = S-hexadecanoyl-L-cysteinyl-[protein] + CoA. The enzyme catalyses L-cysteinyl-[protein] + tetradecanoyl-CoA = S-tetradecanoyl-L-cysteinyl-[protein] + CoA. It catalyses the reaction L-cysteinyl-[protein] + octadecanoyl-CoA = S-octadecanoyl-L-cysteinyl-[protein] + CoA. Its function is as follows. Palmitoyltransferase that could catalyze the addition of palmitate onto various protein substrates. Catalyzes palmitoylation of Cys residues in the cytoplasmic C-terminus of EGFR, and modulates the duration of EGFR signaling by modulating palmitoylation-dependent EGFR internalization and degradation. Has a preference for acyl-CoA with C16 fatty acid chains. Can also utilize acyl-CoA with C14 and C18 fatty acid chains. May palmitoylate CALHM1 subunit of gustatory voltage-gated ion channels and modulate channel gating and kinetics. This is Palmitoyltransferase ZDHHC20 from Mus musculus (Mouse).